The following is a 177-amino-acid chain: Cytochrome c oxidase assembly protein CtaG (177 aa).

The Cytoplasmic portion of the chain corresponds to 1–8 (MTQKAKNT). A helical; Signal-anchor for type II membrane protein membrane pass occupies residues 9–29 (IYLLILIILSMLCLVYASVPL). Residues 30 to 177 (YSIFCKVTGY…TFFKYKENTK (148 aa)) are Periplasmic-facing.

It belongs to the COX11/CtaG family.

The protein localises to the cell inner membrane. Exerts its effect at some terminal stage of cytochrome c oxidase synthesis, probably by being involved in the insertion of the copper B into subunit I. In Ehrlichia ruminantium (strain Welgevonden), this protein is Cytochrome c oxidase assembly protein CtaG.